Here is a 261-residue protein sequence, read N- to C-terminus: Kynurenine formamidase (261 aa).

A Phosphoserine modification is found at Ser9. Residues His36–Trp40 carry the HGGXW motif. Residue Ser110 is the Nucleophile of the active site. Residues Asp211 and His243 contribute to the active site.

The protein belongs to the kynurenine formamidase family. In terms of assembly, homodimer.

The enzyme catalyses N-formyl-L-kynurenine + H2O = L-kynurenine + formate + H(+). Its pathway is amino-acid degradation; L-tryptophan degradation via kynurenine pathway; L-kynurenine from L-tryptophan: step 2/2. Its function is as follows. Catalyzes the hydrolysis of N-formyl-L-kynurenine to L-kynurenine, the second step in the kynurenine pathway of tryptophan degradation. Kynurenine may be further oxidized to nicotinic acid, NAD(H) and NADP(H). Required for elimination of toxic metabolites. The polypeptide is Kynurenine formamidase (Saccharomyces cerevisiae (strain ATCC 204508 / S288c) (Baker's yeast)).